The primary structure comprises 269 residues: MSAIPEPRIIENDDGSKTVISFKIQDGKKYKVTQKVKEITVTEKVNKNIALRRNWKKYGADKGAAPGPDISTTQLGEELELDLSPNWKEMEEEKAKEKAANSTQKVITCRICGGAHFTMHCPYKDTLGKKPTTSAGLDPAIGGGDMSAQGGSGSGRYVPPSLRAGARDPSSNAYQDQRERDDAKTIRLTQVNELADEEVLKRELLFPFGEIPRVFVVKNPETGRSRGVAYVTFQTEEIAAQALKLLEGRGFMNFMLHAEWSKPKPKKEE.

Residues 140 to 181 (AIGGGDMSAQGGSGSGRYVPPSLRAGARDPSSNAYQDQRERD) form a disordered region. Residues 141–154 (IGGGDMSAQGGSGS) show a composition bias toward gly residues. A Phosphoserine modification is found at serine 161. An RRM domain is found at 184-263 (KTIRLTQVNE…FMLHAEWSKP (80 aa)).

The protein belongs to the eIF-3 subunit G family. In terms of assembly, component of the eukaryotic translation initiation factor 3 (eIF-3) complex.

It localises to the cytoplasm. Functionally, RNA-binding component of the eukaryotic translation initiation factor 3 (eIF-3) complex, which is involved in protein synthesis of a specialized repertoire of mRNAs and, together with other initiation factors, stimulates binding of mRNA and methionyl-tRNAi to the 40S ribosome. The eIF-3 complex specifically targets and initiates translation of a subset of mRNAs involved in cell proliferation. This subunit can bind 18S rRNA. This chain is Eukaryotic translation initiation factor 3 subunit G, found in Kluyveromyces lactis (strain ATCC 8585 / CBS 2359 / DSM 70799 / NBRC 1267 / NRRL Y-1140 / WM37) (Yeast).